The sequence spans 553 residues: Glycerol kinase 2 (553 aa).

Substrate is bound at residue Thr-20. Arg-24 is a binding site for ATP. Residues Arg-94, Tyr-148, and Asp-259 each contribute to the substrate site. ATP is bound by residues Thr-281, Gly-326, and 427-431 (GMTNN). The helical transmembrane segment at 526 to 546 (IFSSLPLGFFIVSSMVMLIGA) threads the bilayer.

The protein belongs to the FGGY kinase family. In terms of assembly, interacts with ARMC12. Interacts with PLD6. In terms of tissue distribution, testis-specific. Expressed in the midpiece of spermatozoa.

Its subcellular location is the mitochondrion outer membrane. It localises to the cytoplasm. The catalysed reaction is glycerol + ATP = sn-glycerol 3-phosphate + ADP + H(+). It participates in polyol metabolism; glycerol degradation via glycerol kinase pathway; sn-glycerol 3-phosphate from glycerol: step 1/1. Its function is as follows. Key enzyme in the regulation of glycerol uptake and metabolism. Essential for male fertility and sperm mitochondrial sheath formation. Required for proper arrangement of crescent-like mitochondria to form the mitochondrial sheath during spermatogenesis. Can induce mitochondrial clustering through interactions with PLD6 and up-regulation of phosphatidic acid synthesis in the mitochondria. The polypeptide is Glycerol kinase 2 (GK2) (Homo sapiens (Human)).